The chain runs to 103 residues: MEQVQAALNATADKATLTPQMQRMMNRQAENTKRVEETIKGTKSNPRWFVPLFCALMIIGLIWCVVYYLSPSGSWPIPNIGAWNLGIGFALIMIGFLMTMGWR.

2 helical membrane passes run F49–L69 and I80–M100.

It belongs to the CrgA family.

Its subcellular location is the cell membrane. In terms of biological role, involved in cell division. The protein is Cell division protein CrgA of Bifidobacterium longum (strain NCC 2705).